The chain runs to 880 residues: Zinc-responsive transcriptional regulator ZAP1 (880 aa).

Disordered stretches follow at residues 1–26 (MDALTPRDSPKRDDSMATSAATAASA) and 140–164 (NNFHSVASDPTSPQQNSKSDLPRRK). The segment covering 17-26 (ATSAATAASA) has biased composition (low complexity). The span at 147-158 (SDPTSPQQNSKS) shows a compositional bias: polar residues. Phosphoserine is present on residues S156 and S166. The segment at 182–502 (KPNPPPGSDD…LTNNDLNDLI (321 aa)) is zinc-responsive domain 1 (ZRD(AD1)). The transcription activation domain 1 (AD1) stretch occupies residues 207–402 (HPKSEANIKQ…YEVPFGKHIN (196 aa)). Disordered regions lie at residues 436–482 (NRCN…VNNS) and 510–555 (RFRN…PSSI). Residues 442–456 (NNLNGSNNNTAGATS) show a composition bias toward low complexity. Residues 460 to 474 (QHHHHRIQFHSHKPN) show a composition bias toward basic residues. A Phosphoserine modification is found at S515. The segment covering 545–555 (SSLEDSLPSSI) has biased composition (low complexity). The C2H2-type 1 zinc finger occupies 579-604 (LKCKWKECPESCSSLFDLQRHLLKDH). The zinc-responsive domain 2 (ZRD(AD2)) stretch occupies residues 579 to 641 (LKCKWKECPE…SIVNHINCQH (63 aa)). Zn(2+)-binding residues include C581, C586, H599, H604, C618, C623, H636, and H641. Residues 611 to 640 (HPMEPLACNWEDCDFLGDDTCSIVNHINCQ) are transcription activation domain 2 (AD2). The segment at 616-641 (LACNWEDCDFLGDDTCSIVNHINCQH) adopts a C2H2-type 2; atypical zinc-finger fold. C2H2-type zinc fingers lie at residues 705-730 (VICQWDGCNKSFSSAQELNDHLEAVH), 738-762 (YQCLWHDCHRTFPQRQKLIRHLKVH), 768-790 (YKCKTCKRCFSSEETLVQHTRTH), 796-818 (YKCHICNKKFAISSSLKIHIRTH), and 824-846 (LQCKICGKRFNESSNLSKHIKTH). A DNA-binding region (DNA-binding domain) is located at residues 705–846 (VICQWDGCNK…SNLSKHIKTH (142 aa)).

It localises to the nucleus. Active in zinc-limited cells and repressed in replete cells. Zinc controls ZAP1 DNA binding activity. Transcription regulator controlling zinc-responsive gene expression. Binds to zinc-responsive elements (ZREs) (consensus sequence 5'-ACCYYNAAGGT-3') in the promoter of target genes. Recruits SWI/SNF, SAGA, and Mediator complexes as coactivators in a zinc-responsive manner. Involved in zinc ion homeostasis by zinc-responsive transcriptional regulation of the zinc uptake system genes ZTR1 and ZTR2. Positively regulates ETR1 expression, affecting mitochondrial function. The chain is Zinc-responsive transcriptional regulator ZAP1 (ZAP1) from Saccharomyces cerevisiae (strain ATCC 204508 / S288c) (Baker's yeast).